The chain runs to 120 residues: Immunoglobulin lambda variable 2-14 (120 aa).

The first 19 residues, 1 to 19 (MAWALLLLTLLTQGTGSWA), serve as a signal peptide directing secretion. Gln-20 carries the pyrrolidone carboxylic acid modification. The interval 20 to 44 (QSALTQPASVSGSPGQSITISCTGT) is framework-1. One can recognise an Ig-like domain in the interval 20–119 (QSALTQPASV…SSYTSSSTLH (100 aa)). Cysteines 41 and 109 form a disulfide. The segment at 45 to 53 (SSDVGGYNY) is complementarity-determining-1. Residues 54-70 (VSWYQQHPGKAPKLMIY) form a framework-2 region. The segment at 71–73 (EVS) is complementarity-determining-2. A framework-3 region spans residues 74-109 (NRPSGVSNRFSGSKSGNTASLTISGLQAEDEADYYC). A complementarity-determining-3 region spans residues 110–119 (SSYTSSSTLH).

In terms of assembly, immunoglobulins are composed of two identical heavy chains and two identical light chains; disulfide-linked.

It localises to the secreted. The protein localises to the cell membrane. In terms of biological role, v region of the variable domain of immunoglobulin light chains that participates in the antigen recognition. Immunoglobulins, also known as antibodies, are membrane-bound or secreted glycoproteins produced by B lymphocytes. In the recognition phase of humoral immunity, the membrane-bound immunoglobulins serve as receptors which, upon binding of a specific antigen, trigger the clonal expansion and differentiation of B lymphocytes into immunoglobulins-secreting plasma cells. Secreted immunoglobulins mediate the effector phase of humoral immunity, which results in the elimination of bound antigens. The antigen binding site is formed by the variable domain of one heavy chain, together with that of its associated light chain. Thus, each immunoglobulin has two antigen binding sites with remarkable affinity for a particular antigen. The variable domains are assembled by a process called V-(D)-J rearrangement and can then be subjected to somatic hypermutations which, after exposure to antigen and selection, allow affinity maturation for a particular antigen. The polypeptide is Immunoglobulin lambda variable 2-14 (Homo sapiens (Human)).